The following is a 351-amino-acid chain: Flagellin (351 aa).

The protein belongs to the bacterial flagellin family.

The protein resides in the secreted. The protein localises to the bacterial flagellum. Functionally, flagellin is the subunit protein which polymerizes to form the filaments of bacterial flagella. The protein is Flagellin (fliC) of Serratia marcescens.